Reading from the N-terminus, the 352-residue chain is C-C chemokine receptor type 5 (352 aa).

Residues 1 to 30 (MDYQVSSPTYDIDYYTSEPCQKVNVKQIAA) are Extracellular-facing. Y3 is subject to Sulfotyrosine. 2 O-linked (GalNAc...) serine glycosylation sites follow: S6 and S7. 3 positions are modified to sulfotyrosine: Y10, Y14, and Y15. 2 disulfides stabilise this stretch: C20–C269 and C101–C178. A helical membrane pass occupies residues 31–58 (RLLPPLYSLVFIFGFVGNILVVLILINC). Residues 59-68 (KRLKSMTDIY) are Cytoplasmic-facing. Residues 69 to 89 (LLNLAISDLFFLLTVPFWAHY) traverse the membrane as a helical segment. Residues 90 to 102 (AAARWDFGNTMCQ) are Extracellular-facing. A helical transmembrane segment spans residues 103–124 (LLTGLYFIGFFSGIFFIILLTI). Topologically, residues 125–141 (DRYLAIVHAVFALKART) are cytoplasmic. Residues 142-166 (VTFGVVTSVITWVVAVFASLPGIIF) traverse the membrane as a helical segment. Residues 167–198 (TRSQREGLHYTCSSHFPYSQYQFWKNFQTLKI) lie on the Extracellular side of the membrane. A helical membrane pass occupies residues 199–218 (VILGLVLPLLVMVICYSGIL). Residues 219–235 (KTLLRCRNEKKRHRAVR) lie on the Cytoplasmic side of the membrane. Residues 236–260 (LIFTIMIVYFLFWAPYNIVLLLNTF) traverse the membrane as a helical segment. Over 261 to 277 (QEFFGLNNCSSSNRLDQ) the chain is Extracellular. A helical transmembrane segment spans residues 278–301 (AMQVTETLGMTHCCINPIIYAFVG). Over 302–352 (EKFRNYLLVFFQKHIAKRFCKCCSIFQQEAPERASSVYTRSTGEQEISVGL) the chain is Cytoplasmic. S-palmitoyl cysteine attachment occurs at residues C321, C323, and C324. Phosphoserine; by BARK1 occurs at positions 336, 337, 342, and 349.

This sequence belongs to the G-protein coupled receptor 1 family. Interacts with PRAF2. Efficient ligand binding to CCL3/MIP-1alpha and CCL4/MIP-1beta requires sulfation, O-glycosylation and sialic acid modifications. Glycosylation on Ser-6 is required for efficient binding of CCL4. Interacts with GRK2. Interacts with ARRB1 and ARRB2. Interacts with CNIH4. Interacts with S100A4; this interaction stimulates T-lymphocyte chemotaxis. In terms of processing, sulfated on at least 2 of the N-terminal tyrosines. Sulfation is required for efficient binding of the chemokines, CCL3 and CCL4. Post-translationally, palmitoylation in the C-terminal is important for cell surface expression. Phosphorylation on serine residues in the C-terminal is stimulated by binding CC chemokines especially by APO-RANTES. In terms of processing, O-glycosylated, but not N-glycosylated. Ser-6 appears to be the major site even if Ser-7 may be also O-glycosylated. Also sialylated glycans present which contribute to chemokine binding. Thr-16 and Ser-17 may also be glycosylated and, if so, with small moieties such as a T-antigen.

It is found in the cell membrane. Functionally, receptor for a number of inflammatory CC-chemokines including CCL3/MIP-1-alpha, CCL4/MIP-1-beta and RANTES and subsequently transduces a signal by increasing the intracellular calcium ion level. May play a role in the control of granulocytic lineage proliferation or differentiation. Participates in T-lymphocyte migration to the infection site by acting as a chemotactic receptor. This is C-C chemokine receptor type 5 (CCR5) from Nasalis larvatus (Proboscis monkey).